The sequence spans 65 residues: Large ribosomal subunit protein bL35 (65 aa).

Residues methionine 1 to glutamine 26 are disordered.

This sequence belongs to the bacterial ribosomal protein bL35 family.

The protein is Large ribosomal subunit protein bL35 of Idiomarina loihiensis (strain ATCC BAA-735 / DSM 15497 / L2-TR).